The primary structure comprises 487 residues: uncharacterized protein (487 aa).

Residues 7–28 form a helical membrane-spanning segment; that stretch reads HVISIFETLGAYFINIFYNFLY. N73, N83, and N195 each carry an N-linked (GlcNAc...) asparagine; by host glycan. A coiled-coil region spans residues 196–235; that stretch reads RSLLHQIEELTSEKKSLLADLSTLRKKYEKRQSEYRRLVQ. Polar residues predominate over residues 294–305; the sequence is TSQELTSKSPNN. Residues 294-324 form a disordered region; it reads TSQELTSKSPNNYPVPHSRTIVSKPSDNYPV. N462 is a glycosylation site (N-linked (GlcNAc...) asparagine; by host).

It belongs to the asfivirus B475L family.

The protein resides in the host membrane. This is an uncharacterized protein from African swine fever virus (isolate Tick/South Africa/Pretoriuskop Pr4/1996) (ASFV).